The following is a 771-amino-acid chain: Probable exo-1,4-beta-xylosidase xlnD (771 aa).

The signal sequence occupies residues 1 to 25 (MARIMSWHYGKAITLFVCLGPVALS). N-linked (GlcNAc...) asparagine glycosylation occurs at asparagine 67. The active site involves aspartate 293. Asparagine 305, asparagine 345, asparagine 423, and asparagine 464 each carry an N-linked (GlcNAc...) asparagine glycan.

It belongs to the glycosyl hydrolase 3 family.

The protein localises to the secreted. It carries out the reaction Hydrolysis of (1-&gt;4)-beta-D-xylans, to remove successive D-xylose residues from the non-reducing termini.. Its pathway is glycan degradation; xylan degradation. Its function is as follows. Xylan 1,4-beta-xylosidase involved in the hydrolysis of xylan, a major structural heterogeneous polysaccharide found in plant biomass representing the second most abundant polysaccharide in the biosphere, after cellulose. This is Probable exo-1,4-beta-xylosidase xlnD (xlnD) from Neosartorya fischeri (strain ATCC 1020 / DSM 3700 / CBS 544.65 / FGSC A1164 / JCM 1740 / NRRL 181 / WB 181) (Aspergillus fischerianus).